The primary structure comprises 370 residues: MRSGYTLPVFACAGAIAALHWLRQRQSIQVALVDLIEPAQIAEVPIEQVAGLSANMALAITRSDPGDNLDLTKNTPIWAVVEWGKTGGEQVTIKGGEGIGKQVNADNQAAIYSYAQRLLQANLTRLLAPEESIIVTIILPEGRSLAVRTSNSAFGVVEGLSLLGTTGISQPLSSPDQLDAFRSELQHKASLYESLVFCIGENGLDLARKIGINAEKLVKTANWLGPMLVEADALGVKEILLFGYHGKLMKLAGGIFHTHHHLADGRREVLATHCALAGLSKQDIEIVFHSPTAEAALKHLKALDISTGNDWVNQVYSAIAETIDSRCQEYMQSHSSRGTAATICGSILFDRDRKIIVKSKTACNLMGNLC.

Belongs to the CbiD family.

The enzyme catalyses Co-precorrin-5B + S-adenosyl-L-methionine = Co-precorrin-6A + S-adenosyl-L-homocysteine. It functions in the pathway cofactor biosynthesis; adenosylcobalamin biosynthesis; cob(II)yrinate a,c-diamide from sirohydrochlorin (anaerobic route): step 6/10. In terms of biological role, catalyzes the methylation of C-1 in cobalt-precorrin-5B to form cobalt-precorrin-6A. The polypeptide is Cobalt-precorrin-5B C(1)-methyltransferase (Nostoc sp. (strain PCC 7120 / SAG 25.82 / UTEX 2576)).